A 31-amino-acid chain; its full sequence is Cytochrome b6-f complex subunit 6 (31 aa).

A helical transmembrane segment spans residues 4 to 26 (ITSYFGFLLAALTVTSALFIGLS).

This sequence belongs to the PetL family. The 4 large subunits of the cytochrome b6-f complex are cytochrome b6, subunit IV (17 kDa polypeptide, PetD), cytochrome f and the Rieske protein, while the 4 small subunits are PetG, PetL, PetM and PetN. The complex functions as a dimer.

The protein localises to the plastid. Its subcellular location is the chloroplast thylakoid membrane. Functionally, component of the cytochrome b6-f complex, which mediates electron transfer between photosystem II (PSII) and photosystem I (PSI), cyclic electron flow around PSI, and state transitions. PetL is important for photoautotrophic growth as well as for electron transfer efficiency and stability of the cytochrome b6-f complex. The polypeptide is Cytochrome b6-f complex subunit 6 (Daucus carota (Wild carrot)).